The primary structure comprises 2201 residues: Genome polyprotein (2201 aa).

The N-myristoyl glycine; by host moiety is linked to residue glycine 2. Over 2–1511 the chain is Cytoplasmic; the sequence is GAQVSTQKTG…YVSRAFICLQ (1510 aa). The amphipathic alpha-helix stretch occupies residues 566-582; that stretch reads KLQGDVEEAIERARCTV. The Cell attachment site motif lies at 858-860; sequence RGD. Catalysis depends on for protease 2A activity residues histidine 888 and aspartate 906. The Zn(2+) site is built by cysteine 923 and cysteine 925. The For protease 2A activity role is filled by cysteine 977. Zn(2+) is bound by residues cysteine 983 and histidine 985. Positions 1117-1189 are membrane-binding; sequence NDSWLKKFTE…EQSAPSQSDQ (73 aa). The tract at residues 1117–1255 is oligomerization; the sequence is NDSWLKKFTE…SPGAGKSVAT (139 aa). The tract at residues 1138–1142 is RNA-binding; the sequence is AIKIQ. Residues 1221–1377 form the SF3 helicase domain; sequence EKKMSNYIQF…SMYSQNGKIN (157 aa). The Zn(2+) site is built by cysteine 1385, cysteine 1397, and cysteine 1402. The segment at 1385–1402 adopts a C4-type; degenerate zinc-finger fold; that stretch reads CDEECCPVNFKKCCPLVC. Positions 1429–1436 are RNA-binding; the sequence is EYNHRHSV. An oligomerization region spans residues 1440 to 1445; that stretch reads LEALFQ. The stretch at 1512–1527 is an intramembrane region; the sequence is AITTFVSVAGIIYIIY. Over 1528–2201 the chain is Cytoplasmic; the sequence is KLFAGFQGAY…TLRRKWLDSF (674 aa). Residue tyrosine 1537 is modified to O-(5'-phospho-RNA)-tyrosine. The 179-residue stretch at 1557 to 1735 folds into the Peptidase C3 domain; it reads GPAFEFAVAM…FSAALLKHYF (179 aa). Residues histidine 1596, glutamate 1627, and cysteine 1703 each act as for protease 3C activity in the active site. The region spanning 1966–2082 is the RdRp catalytic domain; the sequence is GHLIAFDYSG…SYPWPIDASL (117 aa). Mg(2+) contacts are provided by aspartate 1972 and aspartate 2068.

Belongs to the picornaviruses polyprotein family. In terms of assembly, interacts with capsid protein VP1 and capsid protein VP3 to form heterotrimeric protomers. As to quaternary structure, interacts with capsid protein VP0, and capsid protein VP3 to form heterotrimeric protomers. Five protomers subsequently associate to form pentamers which serve as building blocks for the capsid. Interacts with capsid protein VP2, capsid protein VP3 and capsid protein VP4 following cleavage of capsid protein VP0. Interacts with host integrin heterodimer ITGAV/ITGB6. Interacts with capsid protein VP1 and capsid protein VP3 in the mature capsid. In terms of assembly, interacts with capsid protein VP0 and capsid protein VP1 to form heterotrimeric protomers. Five protomers subsequently associate to form pentamers which serve as building blocks for the capsid. Interacts with capsid protein VP4 in the mature capsid. Interacts with protein 2C; this interaction may be important for virion morphogenesis. As to quaternary structure, interacts with capsid protein VP1 and capsid protein VP3. Homodimer. In terms of assembly, homohexamer; forms a hexameric ring structure with 6-fold symmetry characteristic of AAA+ ATPases. Interacts (via N-terminus) with host RTN3 (via reticulon domain); this interaction is important for viral replication. Interacts with capsid protein VP3; this interaction may be important for virion morphogenesis. As to quaternary structure, interacts with protein 3CD. Homodimer. Interacts with host GBF1. Interacts (via GOLD domain) with host ACBD3 (via GOLD domain); this interaction allows the formation of a viral protein 3A/ACBD3 heterotetramer with a 2:2 stoichiometry, which will stimulate the recruitment of host PI4KB in order to synthesize PI4P at the viral RNA replication sites. In terms of assembly, interacts with RNA-directed RNA polymerase. As to quaternary structure, interacts with protein 3AB and with RNA-directed RNA polymerase. Interacts with Viral protein genome-linked and with protein 3CD. Mg(2+) serves as cofactor. Specific enzymatic cleavages in vivo by the viral proteases yield processing intermediates and the mature proteins. In terms of processing, myristoylation is required for the formation of pentamers during virus assembly. Further assembly of 12 pentamers and a molecule of genomic RNA generates the provirion. Post-translationally, during virion maturation, immature virions are rendered infectious following cleavage of VP0 into VP4 and VP2. This maturation seems to be an autocatalytic event triggered by the presence of RNA in the capsid and it is followed by a conformational change infectious virion. Myristoylation is required during RNA encapsidation and formation of the mature virus particle. In terms of processing, VPg is uridylylated by the polymerase into VPg-pUpU. This acts as a nucleotide-peptide primer for the genomic RNA replication.

Its subcellular location is the virion. It is found in the host cytoplasm. The protein resides in the host cytoplasmic vesicle membrane. The protein localises to the host nucleus. It carries out the reaction a ribonucleoside 5'-triphosphate + H2O = a ribonucleoside 5'-diphosphate + phosphate + H(+). The enzyme catalyses Selective cleavage of Tyr-|-Gly bond in the picornavirus polyprotein.. The catalysed reaction is RNA(n) + a ribonucleoside 5'-triphosphate = RNA(n+1) + diphosphate. It catalyses the reaction Selective cleavage of Gln-|-Gly bond in the poliovirus polyprotein. In other picornavirus reactions Glu may be substituted for Gln, and Ser or Thr for Gly.. Replication or transcription is subject to high level of random mutations by the nucleotide analog ribavirin. Functionally, forms an icosahedral capsid of pseudo T=3 symmetry with capsid proteins VP2 and VP3. The capsid is 300 Angstroms in diameter, composed of 60 copies of each capsid protein and enclosing the viral positive strand RNA genome. Capsid protein VP1 mainly forms the vertices of the capsid. Capsid protein VP1 interacts with host integrin ITGAV/ITGB6 to provide virion attachment to target host cells. This attachment induces virion internalization. Tyrosine kinases are probably involved in the entry process. After binding to its receptor, the capsid undergoes conformational changes. Capsid protein VP1 N-terminus (that contains an amphipathic alpha-helix) and capsid protein VP4 are externalized. Together, they shape a pore in the host membrane through which viral genome is translocated to host cell cytoplasm. Its function is as follows. Forms an icosahedral capsid of pseudo T=3 symmetry with capsid proteins VP2 and VP3. The capsid is 300 Angstroms in diameter, composed of 60 copies of each capsid protein and enclosing the viral positive strand RNA genome. Lies on the inner surface of the capsid shell. After binding to the host receptor, the capsid undergoes conformational changes. Capsid protein VP4 is released, Capsid protein VP1 N-terminus is externalized, and together, they shape a pore in the host membrane through which the viral genome is translocated into the host cell cytoplasm. In terms of biological role, component of immature procapsids, which is cleaved into capsid proteins VP4 and VP2 after maturation. Allows the capsid to remain inactive before the maturation step. Functionally, cysteine protease that cleaves viral polyprotein and specific host proteins. It is responsible for the autocatalytic cleavage between the P1 and P2 regions, which is the first cleavage occurring in the polyprotein. Also cleaves the host translation initiation factor EIF4G1, in order to shut down the capped cellular mRNA translation. Inhibits the host nucleus-cytoplasm protein and RNA trafficking by cleaving host members of the nuclear pores. Counteracts stress granule formation probably by antagonizing its assembly or promoting its dissassembly. Cleaves and inhibits host IFIH1/MDA5, thereby inhibiting the type-I IFN production and the establishment of the antiviral state. Cleaves and inhibits host MAVS, thereby inhibiting the type-I IFN production and the establishment of the antiviral state. Its function is as follows. Plays an essential role in the virus replication cycle by acting as a viroporin. Creates a pore in the host endoplasmic reticulum and as a consequence releases Ca2+ in the cytoplasm of infected cell. In turn, high levels of cytoplasmic calcium may trigger membrane trafficking and transport of viral ER-associated proteins to viroplasms, sites of viral genome replication. Induces and associates with structural rearrangements of intracellular membranes. Displays RNA-binding, nucleotide binding and NTPase activities. May play a role in virion morphogenesis and viral RNA encapsidation by interacting with the capsid protein VP3. In terms of biological role, localizes the viral replication complex to the surface of membranous vesicles. Together with protein 3CD binds the Cis-Active RNA Element (CRE) which is involved in RNA synthesis initiation. Acts as a cofactor to stimulate the activity of 3D polymerase, maybe through a nucleid acid chaperone activity. Functionally, localizes the viral replication complex to the surface of membranous vesicles. It inhibits host cell endoplasmic reticulum-to-Golgi apparatus transport and causes the disassembly of the Golgi complex, possibly through GBF1 interaction. This would result in depletion of MHC, trail receptors and IFN receptors at the host cell surface. Plays an essential role in viral RNA replication by recruiting ACBD3 and PI4KB at the viral replication sites, thereby allowing the formation of the rearranged membranous structures where viral replication takes place. Its function is as follows. Acts as a primer for viral RNA replication and remains covalently bound to viral genomic RNA. VPg is uridylylated prior to priming replication into VPg-pUpU. The oriI viral genomic sequence may act as a template for this. The VPg-pUpU is then used as primer on the genomic RNA poly(A) by the RNA-dependent RNA polymerase to replicate the viral genome. During genome replication, the VPg-RNA linkage is removed by the host TDP2, thereby accelerating replication. During the late stage of the replication cycle, host TDP2 is excluded from sites of viral RNA synthesis and encapsidation, allowing for the generation of progeny virions. Involved in the viral replication complex and viral polypeptide maturation. It exhibits protease activity with a specificity and catalytic efficiency that is different from protease 3C. Protein 3CD lacks polymerase activity. Protein 3CD binds to the 5'UTR of the viral genome. In terms of biological role, replicates the viral genomic RNA on the surface of intracellular membranes. May form linear arrays of subunits that propagate along a strong head-to-tail interaction called interface-I. Covalently attaches UMP to a tyrosine of VPg, which is used to prime RNA synthesis. The positive stranded RNA genome is first replicated at virus induced membranous vesicles, creating a dsRNA genomic replication form. This dsRNA is then used as template to synthesize positive stranded RNA genomes. ss(+)RNA genomes are either translated, replicated or encapsidated. Functionally, major viral protease that mediates proteolytic processing of the polyprotein. Cleaves host EIF5B, contributing to host translation shutoff. Also cleaves host PABPC1, contributing to host translation shutoff. Cleaves host NLRP1, triggers host N-glycine-mediated degradation of the autoinhibitory NLRP1 N-terminal fragment. This is Genome polyprotein from Coxsackievirus A9 (strain Griggs).